A 291-amino-acid polypeptide reads, in one-letter code: Pyridoxal kinase PdxY (291 aa).

Residues serine 9 and 44–45 (TQ) each bind substrate. Residues aspartate 112, valine 144, glutamate 149, lysine 182, and 207–210 (RPHL) each bind ATP. Aspartate 221 is a substrate binding site.

The protein belongs to the pyridoxine kinase family. PdxY subfamily. Homodimer. Requires Mg(2+) as cofactor.

It catalyses the reaction pyridoxal + ATP = pyridoxal 5'-phosphate + ADP + H(+). Its pathway is cofactor metabolism; pyridoxal 5'-phosphate salvage; pyridoxal 5'-phosphate from pyridoxal: step 1/1. Functionally, pyridoxal kinase involved in the salvage pathway of pyridoxal 5'-phosphate (PLP). Catalyzes the phosphorylation of pyridoxal to PLP. This is Pyridoxal kinase PdxY from Photobacterium profundum (strain SS9).